Consider the following 142-residue polypeptide: Prefoldin subunit alpha (142 aa).

Belongs to the prefoldin subunit alpha family. In terms of assembly, heterohexamer of two alpha and four beta subunits.

The protein localises to the cytoplasm. Functionally, molecular chaperone capable of stabilizing a range of proteins. Seems to fulfill an ATP-independent, HSP70-like function in archaeal de novo protein folding. The polypeptide is Prefoldin subunit alpha (Methanosarcina mazei (strain ATCC BAA-159 / DSM 3647 / Goe1 / Go1 / JCM 11833 / OCM 88) (Methanosarcina frisia)).